A 297-amino-acid polypeptide reads, in one-letter code: Retroviral cyclin (297 aa).

Residues 21–113 (PVYWKELLNW…KPSLLLTETM (93 aa)) form the Cyclin N-terminal domain. The segment at 21–113 (PVYWKELLNW…KPSLLLTETM (93 aa)) is transcription activation domain. Positions 222 to 270 (QINLDFAEAEQREAAERRALLEREREQQLQEARERLDDVMAVLEAEVAI) form a coiled coil.

This sequence belongs to the cyclin family. In terms of assembly, interacts (via transcription activation domain) with host TAF9 in vitro. Interacts with host CDK3 and CDK8.

The protein localises to the host nucleus. In terms of biological role, transforming protein which induces the development of dermal sarcomas. Induces positive and negative regulation of transcription from host and viral promoters by interacting with various cellular factors involved in protein transcription regulation. The sequence is that of Retroviral cyclin (orfA) from Sander vitreus (Walleye).